The sequence spans 271 residues: Urease accessory protein UreD (271 aa).

The protein belongs to the UreD family. As to quaternary structure, ureD, UreF and UreG form a complex that acts as a GTP-hydrolysis-dependent molecular chaperone, activating the urease apoprotein by helping to assemble the nickel containing metallocenter of UreC. The UreE protein probably delivers the nickel.

It is found in the cytoplasm. In terms of biological role, required for maturation of urease via the functional incorporation of the urease nickel metallocenter. The polypeptide is Urease accessory protein UreD (Bacillus sp. (strain TB-90)).